The following is a 993-amino-acid chain: ATP-dependent DNA helicase MPH1 (993 aa).

The Helicase ATP-binding domain occupies Ile-94–Lys-261. Ile-107–Thr-114 contacts ATP. Residues Asp-209–His-212 carry the DEAH box motif. One can recognise a Helicase C-terminal domain in the interval Lys-507–Ile-655. The interval Asn-530–Met-551 is disordered. Polar residues predominate over residues Arg-539–Met-551. Residues Leu-751–Glu-810 form an FKH1-binding region region. Residues Thr-776 and Thr-785 each carry the phosphothreonine modification.

Belongs to the DEAD box helicase family. DEAH subfamily. FANCM sub-subfamily. As to quaternary structure, interacts with the MHF histone-fold complex composed of MHF1 and MHF2 to form the FANCM-MHF complex. Interacts with FHK1. Phosphorylation at both Thr-776 and Thr-785 is required for the interaction with FKH1.

Its subcellular location is the nucleus. The catalysed reaction is ATP + H2O = ADP + phosphate + H(+). In terms of biological role, ATP-dependent DNA helicase involved in DNA damage repair by homologous recombination and in genome maintenance. Capable of unwinding D-loops. Plays a role in limiting crossover recombinants during mitotic DNA double-strand break (DSB) repair. Prevents crossovers between ectopic sequences by removing substrates for MUS81-MMS4 or RAD1-RAD10 cleavage. Component of a FANCM-MHF complex which promotes gene conversion at blocked replication forks, probably by reversal of the stalled fork. Binds to flap-structured DNA but not to non-flap nicked DNA, and participates in Okazaki fragment processing by stimulating the endonuclease activities of FEN1 and DNA2. Involved in recombination donor preference during mating-type switching via interaction with FKH1. The chain is ATP-dependent DNA helicase MPH1 from Saccharomyces cerevisiae (strain ATCC 204508 / S288c) (Baker's yeast).